The primary structure comprises 473 residues: 3-isopropylmalate dehydratase large subunit 2 (473 aa).

Cysteine 350, cysteine 410, and cysteine 413 together coordinate [4Fe-4S] cluster.

Belongs to the aconitase/IPM isomerase family. LeuC type 1 subfamily. Heterodimer of LeuC and LeuD. The cofactor is [4Fe-4S] cluster.

The catalysed reaction is (2R,3S)-3-isopropylmalate = (2S)-2-isopropylmalate. It participates in amino-acid biosynthesis; L-leucine biosynthesis; L-leucine from 3-methyl-2-oxobutanoate: step 2/4. Its function is as follows. Catalyzes the isomerization between 2-isopropylmalate and 3-isopropylmalate, via the formation of 2-isopropylmaleate. This chain is 3-isopropylmalate dehydratase large subunit 2, found in Salmonella choleraesuis (strain SC-B67).